Reading from the N-terminus, the 675-residue chain is Zinc finger CCCH domain-containing protein 65 (675 aa).

Residues 294–320 (TFSNEAKMDPGTSIKKRSAPSKDAKAR) form a disordered region. The segment covering 307-320 (IKKRSAPSKDAKAR) has biased composition (basic residues). A coiled-coil region spans residues 314–342 (SKDAKARKRAKARIKRAQERIALGVKKLK). 3 consecutive C3H1-type zinc fingers follow at residues 350-377 (PKPIKYCRHYLKGRCHEGDKCKFSHDTI), 384-406 (PCCYFATQSCMKGDDCPFDHDLS), and 409-432 (PCNNFITKGFCYRGDSCLFSHKGT). Disordered stretches follow at residues 487-572 (LKPS…LPLG) and 586-612 (EQKTLNREPQKPASSKNLKTTPSSHIQ). Residues 490–504 (SSHSNQRNSSDASSS) show a composition bias toward low complexity. The span at 543-567 (KASSASKPNTDNSDSQTLKQSQQGS) shows a compositional bias: polar residues. Positions 586–595 (EQKTLNREPQ) are enriched in basic and acidic residues. Over residues 597–612 (PASSKNLKTTPSSHIQ) the composition is skewed to polar residues.

Possesses RNA-binding and ribonuclease activities in vitro. The polypeptide is Zinc finger CCCH domain-containing protein 65 (EMB1789) (Arabidopsis thaliana (Mouse-ear cress)).